A 252-amino-acid chain; its full sequence is F-box protein At5g39250 (252 aa).

The region spanning 1–42 is the F-box domain; sequence MFSEEVLKNVFPLLEGEDLASCMGVCKQWRDIARDDFYWKCQ.

The polypeptide is F-box protein At5g39250 (Arabidopsis thaliana (Mouse-ear cress)).